An 86-amino-acid polypeptide reads, in one-letter code: YcgL domain-containing protein XC_4086 (86 aa).

The YcgL domain occupies 1 to 83 (MHAYVYKSQR…PKTVVLAGEC (83 aa)).

The chain is YcgL domain-containing protein XC_4086 from Xanthomonas campestris pv. campestris (strain 8004).